A 616-amino-acid chain; its full sequence is Protein cereblon (616 aa).

Disordered stretches follow at residues 1 to 39, 63 to 137, and 182 to 220; these read MDEE…DDSV, FGPS…AMPR, and SQER…DIDM. The segment covering 11 to 32 has biased composition (low complexity); that stretch reads AQEQEVAGSAGEAAAGPSGAEV. The span at 96–107 shows a compositional bias: acidic residues; it reads SEEDIVLDDGTE. Residues 183 to 192 show a composition bias toward basic and acidic residues; sequence QERRRSRNSD. Over residues 194-203 the composition is skewed to acidic residues; it reads VSPEAEDDEL. The segment covering 206 to 215 has biased composition (pro residues); the sequence is HPPPPPPRPP. The 226-residue stretch at 257 to 482 folds into the Lon N-terminal domain; it reads HMLIFLHQYI…LIGGILKEET (226 aa). The CULT domain occupies 481–590; sequence ETLFYCRYCN…LAGSSVRIGK (110 aa). Zn(2+) is bound by residues Cys486, Cys489, Cys555, and Cys558.

Belongs to the CRBN family. As to quaternary structure, likely a component of a DCX (DDB1-CUL4-X-box) protein ligase complex. May interact with pic/DDB1. Post-translationally, ubiquitinated.

It localises to the nucleus. Its pathway is protein modification; protein ubiquitination. Substrate recognition component of a DCX (DDB1-CUL4-X-box) E3 protein ligase complex that mediates the ubiquitination and subsequent proteasomal degradation of target proteins. Has an essential role in mediating growth by negatively regulating insulin signaling. It also has a role in maintaining presynaptic function in the neuromuscular junction synapses of third-instar larvae. The chain is Protein cereblon from Drosophila persimilis (Fruit fly).